We begin with the raw amino-acid sequence, 457 residues long: Bifunctional protein GlmU (457 aa).

Residues 1–230 (MSKRYAVVLA…FEESLGVNDR (230 aa)) form a pyrophosphorylase region. Residues 9–12 (LAAG), Lys23, Gln73, and 78–79 (GT) contribute to the UDP-N-acetyl-alpha-D-glucosamine site. Asp103 contacts Mg(2+). UDP-N-acetyl-alpha-D-glucosamine contacts are provided by Gly140, Glu155, Asn170, and Asn228. Residue Asn228 participates in Mg(2+) binding. Positions 231-251 (IALAEASRLMQRRINENHMRN) are linker. An N-acetyltransferase region spans residues 252–457 (GVTLVNPENT…GYAKHLNHGK (206 aa)). 2 residues coordinate UDP-N-acetyl-alpha-D-glucosamine: Arg333 and Lys351. His363 serves as the catalytic Proton acceptor. Positions 366 and 377 each coordinate UDP-N-acetyl-alpha-D-glucosamine. Acetyl-CoA contacts are provided by residues 386 to 387 (NY), Ala423, and Arg440.

The protein in the N-terminal section; belongs to the N-acetylglucosamine-1-phosphate uridyltransferase family. This sequence in the C-terminal section; belongs to the transferase hexapeptide repeat family. Homotrimer. It depends on Mg(2+) as a cofactor.

It localises to the cytoplasm. The enzyme catalyses alpha-D-glucosamine 1-phosphate + acetyl-CoA = N-acetyl-alpha-D-glucosamine 1-phosphate + CoA + H(+). The catalysed reaction is N-acetyl-alpha-D-glucosamine 1-phosphate + UTP + H(+) = UDP-N-acetyl-alpha-D-glucosamine + diphosphate. Its pathway is nucleotide-sugar biosynthesis; UDP-N-acetyl-alpha-D-glucosamine biosynthesis; N-acetyl-alpha-D-glucosamine 1-phosphate from alpha-D-glucosamine 6-phosphate (route II): step 2/2. It participates in nucleotide-sugar biosynthesis; UDP-N-acetyl-alpha-D-glucosamine biosynthesis; UDP-N-acetyl-alpha-D-glucosamine from N-acetyl-alpha-D-glucosamine 1-phosphate: step 1/1. The protein operates within bacterial outer membrane biogenesis; LPS lipid A biosynthesis. Its function is as follows. Catalyzes the last two sequential reactions in the de novo biosynthetic pathway for UDP-N-acetylglucosamine (UDP-GlcNAc). The C-terminal domain catalyzes the transfer of acetyl group from acetyl coenzyme A to glucosamine-1-phosphate (GlcN-1-P) to produce N-acetylglucosamine-1-phosphate (GlcNAc-1-P), which is converted into UDP-GlcNAc by the transfer of uridine 5-monophosphate (from uridine 5-triphosphate), a reaction catalyzed by the N-terminal domain. This Listeria monocytogenes serotype 4b (strain F2365) protein is Bifunctional protein GlmU.